Reading from the N-terminus, the 23-residue chain is Acidic phospholipase A2 CTs-A1 (23 aa).

The cofactor is Ca(2+). Contains 7 disulfide bonds. In terms of tissue distribution, expressed by the venom gland.

The protein localises to the secreted. The catalysed reaction is a 1,2-diacyl-sn-glycero-3-phosphocholine + H2O = a 1-acyl-sn-glycero-3-phosphocholine + a fatty acid + H(+). Functionally, snake venom phospholipase A2 (PLA2) that shows a moderate inhibition of ADP-induced human platelet aggregation when tested on platelet rich plasma. Exhibits moderate hydrolytic activities and prefers the anionic micelles (dPPC with deoxycholate) to the zwitterionic micelles (dPPC with Triton X-100). PLA2 catalyzes the calcium-dependent hydrolysis of the 2-acyl groups in 3-sn-phosphoglycerides. This Trimeresurus stejnegeri (Chinese green tree viper) protein is Acidic phospholipase A2 CTs-A1.